The sequence spans 471 residues: Putative ETHYLENE INSENSITIVE 3-like 4 protein (471 aa).

The segment at Asp-280–Cys-316 is disordered. Over residues Pro-304 to Cys-316 the composition is skewed to polar residues.

The protein belongs to the EIN3 family.

The protein localises to the nucleus. Putative transcription factor that may be involved in the ethylene response pathway. The chain is Putative ETHYLENE INSENSITIVE 3-like 4 protein (EIL4) from Arabidopsis thaliana (Mouse-ear cress).